Here is a 126-residue protein sequence, read N- to C-terminus: C-type natriuretic peptide 1 (126 aa).

Residues methionine 1 to alanine 22 form the signal peptide. A propeptide spanning residues arginine 23–arginine 104 is cleaved from the precursor. A disulfide bond links cysteine 110 and cysteine 126.

This sequence belongs to the natriuretic peptide family.

The protein resides in the secreted. Exhibits natriuretic and vasodepressant activity. Has cGMP-stimulating activity. May help to regulate body fluid homeostasis in a variety of aquatic environments. In Takifugu rubripes (Japanese pufferfish), this protein is C-type natriuretic peptide 1.